Reading from the N-terminus, the 411-residue chain is F-box/kelch-repeat protein At3g61590 (411 aa).

An F-box domain is found at Phe-37–Phe-83. Kelch repeat units lie at residues Cys-81 to Gly-135, Val-137 to Ser-178, Ser-196 to Asn-246, Met-251 to Leu-299, Arg-302 to Glu-350, and Phe-352 to Phe-401.

In terms of assembly, part of a SCF (ASK-cullin-F-box) protein ligase complex. Interacts with SKP1A/ASK1, SKP1B/ASK2, ASK3, ASK9, ASK11, ASK12, ASK13, ASK14, ASK16 and ASK18.

It participates in protein modification; protein ubiquitination. Component of SCF(ASK-cullin-F-box) E3 ubiquitin ligase complexes, which may mediate the ubiquitination and subsequent proteasomal degradation of target proteins. This Arabidopsis thaliana (Mouse-ear cress) protein is F-box/kelch-repeat protein At3g61590.